The primary structure comprises 450 residues: Phosphoglucosamine mutase (450 aa).

Catalysis depends on Ser101, which acts as the Phosphoserine intermediate. Mg(2+)-binding residues include Ser101, Asp240, Asp242, and Asp244. Residue Ser101 is modified to Phosphoserine.

This sequence belongs to the phosphohexose mutase family. Requires Mg(2+) as cofactor. Activated by phosphorylation.

It carries out the reaction alpha-D-glucosamine 1-phosphate = D-glucosamine 6-phosphate. Catalyzes the conversion of glucosamine-6-phosphate to glucosamine-1-phosphate. This is Phosphoglucosamine mutase from Streptococcus sanguinis (strain SK36).